Reading from the N-terminus, the 258-residue chain is SMH class II histocompatibility antigen, beta-1 chain (258 aa).

The first 29 residues, 1–29 (MMVLPVPVAPWTAALTVLLMVLNKSVVQG), serve as a signal peptide directing secretion. A beta-1 region spans residues 30–121 (RTTPENYLFR…LNQRLSQSLI (92 aa)). Residues 30–225 (RTTPENYLFR…RAQSDSARNK (196 aa)) are Extracellular-facing. Cystine bridges form between C44-C106 and C144-C200. A beta-2 region spans residues 122–215 (AQPKVHVSPS…SLDRPITVEW (94 aa)). The Ig-like C1-type domain occupies 124-212 (PKVHVSPSKG…EHPSLDRPIT (89 aa)). Residues 216 to 225 (RAQSDSARNK) form a connecting peptide region. N-linked (GlcNAc...) asparagine glycosylation occurs at N224. Residues 226 to 246 (TLTGVGGLVLGLIFLAVGLIM) form a helical membrane-spanning segment. Topologically, residues 247 to 258 (HVRSKKAQRGSR) are cytoplasmic.

This sequence belongs to the MHC class II family.

The protein localises to the membrane. In Spalax ehrenbergi (Middle East blind mole rat), this protein is SMH class II histocompatibility antigen, beta-1 chain.